The primary structure comprises 158 residues: 2-C-methyl-D-erythritol 2,4-cyclodiphosphate synthase (158 aa).

Residues Asp9 and His11 each coordinate a divalent metal cation. 4-CDP-2-C-methyl-D-erythritol 2-phosphate is bound by residues 9 to 11 (DVH) and 35 to 36 (HS). His43 contributes to the a divalent metal cation binding site. Residues 57–59 (DLG), 62–66 (FPDTD), 133–136 (TTTE), Phe140, and Arg143 contribute to the 4-CDP-2-C-methyl-D-erythritol 2-phosphate site.

This sequence belongs to the IspF family. Homotrimer. The cofactor is a divalent metal cation.

It catalyses the reaction 4-CDP-2-C-methyl-D-erythritol 2-phosphate = 2-C-methyl-D-erythritol 2,4-cyclic diphosphate + CMP. The protein operates within isoprenoid biosynthesis; isopentenyl diphosphate biosynthesis via DXP pathway; isopentenyl diphosphate from 1-deoxy-D-xylulose 5-phosphate: step 4/6. In terms of biological role, involved in the biosynthesis of isopentenyl diphosphate (IPP) and dimethylallyl diphosphate (DMAPP), two major building blocks of isoprenoid compounds. Catalyzes the conversion of 4-diphosphocytidyl-2-C-methyl-D-erythritol 2-phosphate (CDP-ME2P) to 2-C-methyl-D-erythritol 2,4-cyclodiphosphate (ME-CPP) with a corresponding release of cytidine 5-monophosphate (CMP). The protein is 2-C-methyl-D-erythritol 2,4-cyclodiphosphate synthase of Desulfitobacterium hafniense (strain DSM 10664 / DCB-2).